Reading from the N-terminus, the 102-residue chain is DET1- and DDB1-associated protein 1 (102 aa).

Positions 67 to 102 are disordered; sequence NAAKKRDQEQVEIEGENSAPPRKIARTDSQDMNEDT.

The protein belongs to the DDA1 family. In terms of assembly, component of numerous DCX (DDB1-CUL4-X-box) E3 ubiquitin-protein ligase complexes which consist of a core of DDB1, cullin-4 (CUL4A or CUL4B), DDA1 and RBX1.

Its pathway is protein modification; protein ubiquitination. Functions as a component of numerous distinct DCX (DDB1-CUL4-X-box) E3 ubiquitin-protein ligase complexes which mediate the ubiquitination and subsequent proteasomal degradation of target proteins. In the DCX complexes, acts as a scaffolding subunit required to stabilize the complex. This chain is DET1- and DDB1-associated protein 1, found in Gallus gallus (Chicken).